Reading from the N-terminus, the 712-residue chain is Ribosomal RNA large subunit methyltransferase K/L (712 aa).

Residues 43–154 (TAYRCCLWTR…GEKGVLGLDM (112 aa)) enclose the THUMP domain.

It belongs to the methyltransferase superfamily. RlmKL family.

The protein resides in the cytoplasm. The catalysed reaction is guanosine(2445) in 23S rRNA + S-adenosyl-L-methionine = N(2)-methylguanosine(2445) in 23S rRNA + S-adenosyl-L-homocysteine + H(+). It carries out the reaction guanosine(2069) in 23S rRNA + S-adenosyl-L-methionine = N(2)-methylguanosine(2069) in 23S rRNA + S-adenosyl-L-homocysteine + H(+). Its function is as follows. Specifically methylates the guanine in position 2445 (m2G2445) and the guanine in position 2069 (m7G2069) of 23S rRNA. This is Ribosomal RNA large subunit methyltransferase K/L from Photobacterium profundum (strain SS9).